Reading from the N-terminus, the 441-residue chain is Ribosomal protein uS12 methylthiotransferase RimO (441 aa).

The MTTase N-terminal domain maps to 8-118 (PKIGFVSLGC…VLEHVHHYVP (111 aa)). Residues Cys-17, Cys-53, Cys-82, Cys-150, Cys-154, and Cys-157 each contribute to the [4Fe-4S] cluster site. The region spanning 136 to 373 (LTPRHYAYLK…MQLQQQISAE (238 aa)) is the Radical SAM core domain. A TRAM domain is found at 376–441 (QEKVGREILV…DEYDLWGSRV (66 aa)).

This sequence belongs to the methylthiotransferase family. RimO subfamily. Requires [4Fe-4S] cluster as cofactor.

It is found in the cytoplasm. The enzyme catalyses L-aspartate(89)-[ribosomal protein uS12]-hydrogen + (sulfur carrier)-SH + AH2 + 2 S-adenosyl-L-methionine = 3-methylsulfanyl-L-aspartate(89)-[ribosomal protein uS12]-hydrogen + (sulfur carrier)-H + 5'-deoxyadenosine + L-methionine + A + S-adenosyl-L-homocysteine + 2 H(+). Catalyzes the methylthiolation of an aspartic acid residue of ribosomal protein uS12. The sequence is that of Ribosomal protein uS12 methylthiotransferase RimO from Citrobacter koseri (strain ATCC BAA-895 / CDC 4225-83 / SGSC4696).